A 346-amino-acid chain; its full sequence is Insertion element IS476 uncharacterized 39.2 kDa protein (346 aa).

Residues 1–50 form a disordered region; it reads MVSARPAFISGGPSTGGWRPTRQAAERTGGPEHSIEEVAGRGAPGHRSAE. The segment covering 29 to 39 has biased composition (basic and acidic residues); sequence GGPEHSIEEVA. The Integrase catalytic domain maps to 169-329; sequence ASSMPNDTWS…IPPAQFAANY (161 aa).

The sequence is that of Insertion element IS476 uncharacterized 39.2 kDa protein from Xanthomonas euvesicatoria.